We begin with the raw amino-acid sequence, 315 residues long: Petrobactin import system permease protein YclO (315 aa).

The next 9 helical transmembrane spans lie at 7–27 (IALL…YDLG), 40–60 (VAAI…FQTI), 76–96 (LYML…MVIM), 100–120 (INFI…YQIM), 128–148 (IFFL…LSSF), 172–192 (INTD…VYVW), 223–243 (LIVV…IMFL), 262–282 (YLIA…QFVV), and 288–308 (FSTT…IYLL).

The protein belongs to the binding-protein-dependent transport system permease family. FecCD subfamily. As to quaternary structure, the complex is composed of two ATP-binding proteins (YclP), two transmembrane proteins (YclN and YclO) and a solute-binding protein (YclQ).

The protein resides in the cell membrane. In terms of biological role, part of the ABC transporter complex YclNOPQ involved in uptake of ferric-petrobactin. Petrobactin is a photoreactive 3,4-catecholate siderophore produced by many members of the B.cereus group, including B.anthracis. Probably responsible for the translocation of the substrate across the membrane. The sequence is that of Petrobactin import system permease protein YclO (yclO) from Bacillus subtilis (strain 168).